The chain runs to 195 residues: Probable GTP-binding protein EngB (195 aa).

The EngB-type G domain maps to 24–195; sequence ELPEIALAGR…EAWDAILEKL (172 aa). GTP is bound by residues 32–39, 59–63, 77–80, 144–147, and 176–178; these read GRSNVGKS, GKTQL, DVPG, TKAD, and FSS. Mg(2+)-binding residues include Ser39 and Thr61.

Belongs to the TRAFAC class TrmE-Era-EngA-EngB-Septin-like GTPase superfamily. EngB GTPase family. Mg(2+) is required as a cofactor.

Necessary for normal cell division and for the maintenance of normal septation. This Streptococcus pneumoniae (strain JJA) protein is Probable GTP-binding protein EngB.